The sequence spans 251 residues: Probable ATP-dependent transporter ycf16 (251 aa).

The region spanning 7 to 251 is the ABC transporter domain; it reads LNIKNLDVTI…EKYGYDYLNK (245 aa). Position 39–46 (39–46) interacts with ATP; that stretch reads GKNGSGKS.

Belongs to the ABC transporter superfamily. Ycf16 family.

Its subcellular location is the plastid. The protein localises to the chloroplast. The polypeptide is Probable ATP-dependent transporter ycf16 (ycf16) (Antithamnion sp. (Red alga)).